A 242-amino-acid polypeptide reads, in one-letter code: ATP-dependent dethiobiotin synthetase BioD (242 aa).

Residue 12–17 participates in ATP binding; sequence EVGKTV. T16 contacts Mg(2+). K37 is a catalytic residue. S41 contributes to the substrate binding site. Residues D51 and 112–115 each bind ATP; that span reads EGAG. Residues D51 and E112 each coordinate Mg(2+).

It belongs to the dethiobiotin synthetase family. In terms of assembly, homodimer. Requires Mg(2+) as cofactor.

It is found in the cytoplasm. It carries out the reaction (7R,8S)-7,8-diammoniononanoate + CO2 + ATP = (4R,5S)-dethiobiotin + ADP + phosphate + 3 H(+). The protein operates within cofactor biosynthesis; biotin biosynthesis; biotin from 7,8-diaminononanoate: step 1/2. Its function is as follows. Catalyzes a mechanistically unusual reaction, the ATP-dependent insertion of CO2 between the N7 and N8 nitrogen atoms of 7,8-diaminopelargonic acid (DAPA, also called 7,8-diammoniononanoate) to form a ureido ring. This chain is ATP-dependent dethiobiotin synthetase BioD, found in Bacillus cereus (strain AH820).